The primary structure comprises 359 residues: Protein mab-21-like 2 (359 aa).

The protein belongs to the mab-21 family.

It localises to the nucleus. Its subcellular location is the cytoplasm. Required for several aspects of embryonic development including normal development of the eye. This is Protein mab-21-like 2 (mab21l2) from Xenopus tropicalis (Western clawed frog).